Here is a 492-residue protein sequence, read N- to C-terminus: GlcNAc-binding protein A (492 aa).

Positions 1 to 23 are cleaved as a signal peptide; the sequence is MNKSSTKTLIALSMMAVSSGVSA. The Chitin-binding type-4 domain occupies 24–204; sequence HGYVSETNDG…AFYNVIDVKF (181 aa). Positions 443–484 constitute a Chitin-binding type-3 domain; that stretch reads AGTKVLAEDSNVYQCKEFPYSGYCVQWTETATNFAPGVGSDW.

This sequence belongs to the GbpA family.

It is found in the secreted. Functionally, probably interacts with GlcNAc residues. May promote attachment to both epithelial cell surfaces and chitin. The protein is GlcNAc-binding protein A of Aliivibrio fischeri (strain MJ11) (Vibrio fischeri).